The chain runs to 1128 residues: Apoptosis-stimulating of p53 protein 2 (1128 aa).

Disordered regions lie at residues 86–106 (PGRDIVSGPRSQDPSLKRNGV) and 322–341 (KENLPVSSDGNLPQQAASAP). Residues 322–339 (KENLPVSSDGNLPQQAAS) are compositionally biased toward polar residues. The interval 332-348 (NLPQQAASAPSRVAAVG) is interaction with APPBP1. Serine 480 carries the post-translational modification Phosphoserine. 2 disordered regions span residues 494–598 (NVAK…LPPF) and 655–706 (NQQQ…LPFL). The span at 528-537 (GSSQQLSTVV) shows a compositional bias: polar residues. Phosphoserine occurs at positions 556, 569, 572, and 576. Residues 558 to 575 (SIPSVGQDQTLSPGSKQE) are compositionally biased toward polar residues. Residues 655 to 670 (NQQQHPENIYSNSQGK) show a composition bias toward polar residues. Phosphoserine is present on residues serine 698, serine 714, and serine 737. Disordered stretches follow at residues 724–748 (KLSNAPRPLKKRSSITEPEGPNGPN) and 802–909 (SLVP…TNLR). Residues 840 to 849 (NSPNLQNNPE) are compositionally biased toward low complexity. Positions 866-875 (YPPYPPPPYP) match the SH3-binding motif. Pro residues predominate over residues 867–876 (PPYPPPPYPS). A mediates interaction with APC2 region spans residues 876 to 1128 (SGEPEGPGED…RIKPRQRSLA (253 aa)). ANK repeat units lie at residues 926-957 (PLALLLDSSLEGEFDLVQRIIYEVDDPSLPND), 958-990 (EGITALHNAVCAGHTEIVKFLVQFGVNVNAADS), 991-1024 (DGWTPLHCAASCNNVQVCKFLVESGAAVFAMTYS), and 1025-1067 (DMQT…ALWD). An SH3 domain is found at 1057–1119 (MNKGVIYALW…PRNLLGLYPR (63 aa)).

It belongs to the ASPP family. In terms of assembly, interacts with P53/TP53; the interaction promotes pro-apoptotic activity. Interacts with BCL2. Interacts with protein phosphatase 1. Interacts with RELA NF-kappa-B subunit. This interaction probably prevents the activation of apoptosis, possibly by preventing its interaction with TP53. Interacts with APC2 and NAE1. Interacts with DDX42 (via the C-terminus); the interaction is not inhibited by TP53BP2 ubiquitination and is independent of p53/TP53. Widely expressed. Expressed in spleen, thymus, prostate, testis, ovary, small intestine, colon and peripheral blood leukocyte. Reduced expression in breast carcinomas expressing a wild-type TP53 protein. Overexpressed in lung cancer cell lines.

The protein localises to the cytoplasm. The protein resides in the perinuclear region. It is found in the nucleus. Its function is as follows. Regulator that plays a central role in regulation of apoptosis and cell growth via its interactions with proteins such as TP53. Regulates TP53 by enhancing the DNA binding and transactivation function of TP53 on the promoters of proapoptotic genes in vivo. Inhibits the ability of NAE1 to conjugate NEDD8 to CUL1, and thereby decreases NAE1 ability to induce apoptosis. Impedes cell cycle progression at G2/M. Its apoptosis-stimulating activity is inhibited by its interaction with DDX42. The sequence is that of Apoptosis-stimulating of p53 protein 2 (TP53BP2) from Homo sapiens (Human).